A 376-amino-acid polypeptide reads, in one-letter code: ORC1-type DNA replication protein 2 (376 aa).

Residues 73 to 77 (TGKTS), Tyr-209, and Arg-221 each bind ATP.

Belongs to the CDC6/cdc18 family.

In terms of biological role, involved in regulation of DNA replication. The sequence is that of ORC1-type DNA replication protein 2 (cdc6-2) from Archaeoglobus fulgidus (strain ATCC 49558 / DSM 4304 / JCM 9628 / NBRC 100126 / VC-16).